A 301-amino-acid chain; its full sequence is uncharacterized protein (301 aa).

A divalent metal cation is bound by residues Glu-146, Glu-148, and Asp-177.

The protein belongs to the FAH family.

This is an uncharacterized protein from Staphylococcus epidermidis (strain ATCC 12228 / FDA PCI 1200).